The sequence spans 46 residues: Antimicrobial peptide eNAP-1 (46 aa).

Cystine bridges form between cysteine 4-cysteine 16 and cysteine 10-cysteine 26.

The protein belongs to the granulin family.

The protein resides in the secreted. In terms of biological role, has antimicrobial activity against Gram-negative and Gram-positive bacteria. This chain is Antimicrobial peptide eNAP-1, found in Equus caballus (Horse).